The primary structure comprises 86 residues: Small ribosomal subunit protein bS20 (86 aa).

The protein belongs to the bacterial ribosomal protein bS20 family.

Its function is as follows. Binds directly to 16S ribosomal RNA. The sequence is that of Small ribosomal subunit protein bS20 from Bifidobacterium adolescentis (strain ATCC 15703 / DSM 20083 / NCTC 11814 / E194a).